We begin with the raw amino-acid sequence, 656 residues long: uncharacterized protein (656 aa).

A disordered region spans residues 623-656 (EIDIPGTPASIDPEWSRPPGSITDDHVFDAPLHR). Residues 645–656 (TDDHVFDAPLHR) are compositionally biased toward basic and acidic residues.

This is an uncharacterized protein from Mycobacterium tuberculosis (strain CDC 1551 / Oshkosh).